We begin with the raw amino-acid sequence, 1377 residues long: Zinc finger MYM-type protein 2 (1377 aa).

Residues Lys-48, Lys-88, Lys-98, and Lys-104 each participate in a glycyl lysine isopeptide (Lys-Gly) (interchain with G-Cter in SUMO2) cross-link. Polar residues-rich tracts occupy residues Thr-85–Glu-115 and Thr-127–Phe-138. The tract at residues Thr-85 to Glu-177 is disordered. Residues Ile-139 to Asp-152 show a composition bias toward basic and acidic residues. Lys-147 participates in a covalent cross-link: Glycyl lysine isopeptide (Lys-Gly) (interchain with G-Cter in SUMO2). Residues Val-153–Lys-164 are compositionally biased toward polar residues. A Phosphoserine modification is found at Ser-159. Glycyl lysine isopeptide (Lys-Gly) (interchain with G-Cter in SUMO2) cross-links involve residues Lys-253 and Lys-297. The interval Asn-273–Ser-305 is disordered. A compositionally biased stretch (polar residues) spans Ser-284–Gln-298. The residue at position 305 (Ser-305) is a Phosphoserine. Glycyl lysine isopeptide (Lys-Gly) (interchain with G-Cter in SUMO2) cross-links involve residues Lys-312, Lys-325, Lys-348, and Lys-366. The segment at Val-327 to Phe-363 adopts an MYM-type 1 zinc-finger fold. Residues Pro-369 to Tyr-409 form an MYM-type 2 zinc finger. Residues Lys-417, Lys-441, Lys-491, Lys-503, Lys-513, Lys-529, and Lys-532 each participate in a glycyl lysine isopeptide (Lys-Gly) (interchain with G-Cter in SUMO2) cross-link. 2 consecutive MYM-type zinc fingers follow at residues Asn-421 to Tyr-456 and Ile-463 to Tyr-502. The segment at Leu-533 to His-570 adopts an MYM-type 5 zinc-finger fold. Glycyl lysine isopeptide (Lys-Gly) (interchain with G-Cter in SUMO2) cross-links involve residues Lys-576, Lys-603, Lys-649, Lys-658, Lys-688, Lys-700, and Lys-709. The segment at Gln-636–Tyr-671 adopts an MYM-type 6 zinc-finger fold. 2 MYM-type zinc fingers span residues Arg-723 to Phe-758 and Lys-764 to Phe-799. Residues Lys-764, Lys-788, Lys-812, and Lys-829 each participate in a glycyl lysine isopeptide (Lys-Gly) (interchain with G-Cter in SUMO2) cross-link. Phosphoserine is present on residues Ser-838 and Ser-958. 2 disordered regions span residues Leu-983–Pro-1002 and Val-1028–Ser-1064. Residues Pro-1039 to Ala-1050 show a composition bias toward basic residues. Ser-1064 is subject to Phosphoserine. Thr-1376 is modified (phosphothreonine).

In terms of assembly, can form homodimers. May be a component of a BHC histone deacetylase complex that contains HDAC1, HDAC2, HMG20B/BRAF35, KDM1A, RCOR1/CoREST, PHF21A/BHC80, ZMYM2, ZNF217, ZMYM3, GSE1 and GTF2I. Interacts with FOXP1 and FOXP2.

It is found in the nucleus. Functionally, involved in the negative regulation of transcription. The chain is Zinc finger MYM-type protein 2 (ZMYM2) from Homo sapiens (Human).